A 475-amino-acid polypeptide reads, in one-letter code: Probable dolichyl pyrophosphate Man9GlcNAc2 alpha-1,3-glucosyltransferase (475 aa).

Helical transmembrane passes span 114 to 133, 161 to 181, 235 to 255, 296 to 316, 322 to 342, 385 to 405, 418 to 438, and 441 to 461; these read VVSA…AYSL, GHFQ…AAIL, AVVL…LQAV, MALV…VLLF, VGFL…SFQV, LLVP…CFDS, IANI…TVPA, and KYPD…FFLF.

Belongs to the ALG6/ALG8 glucosyltransferase family.

It is found in the endoplasmic reticulum membrane. The catalysed reaction is an alpha-D-Man-(1-&gt;2)-alpha-D-Man-(1-&gt;2)-alpha-D-Man-(1-&gt;3)-[alpha-D-Man-(1-&gt;2)-alpha-D-Man-(1-&gt;3)-[alpha-D-Man-(1-&gt;2)-alpha-D-Man-(1-&gt;6)]-alpha-D-Man-(1-&gt;6)]-beta-D-Man-(1-&gt;4)-beta-D-GlcNAc-(1-&gt;4)-alpha-D-GlcNAc-diphospho-di-trans,poly-cis-dolichol + a di-trans,poly-cis-dolichyl beta-D-glucosyl phosphate = an alpha-D-Glc-(1-&gt;3)-alpha-D-Man-(1-&gt;2)-alpha-D-Man-(1-&gt;2)-alpha-D-Man-(1-&gt;3)-[alpha-D-Man-(1-&gt;2)-alpha-D-Man-(1-&gt;3)-[alpha-D-Man-(1-&gt;2)-alpha-D-Man-(1-&gt;6)]-alpha-D-Man-(1-&gt;6)]-beta-D-Man-(1-&gt;4)-beta-D-GlcNAc-(1-&gt;4)-alpha-D-GlcNAc-diphospho-di-trans,poly-cis-dolichol + a di-trans,poly-cis-dolichyl phosphate + H(+). It functions in the pathway protein modification; protein glycosylation. Functionally, adds the first glucose residue to the lipid-linked oligosaccharide precursor for N-linked glycosylation. Transfers glucose from dolichyl phosphate glucose (Dol-P-Glc) onto the lipid-linked oligosaccharide Man(9)GlcNAc(2)-PP-Dol. Involved in cuticle differentiation. This Drosophila melanogaster (Fruit fly) protein is Probable dolichyl pyrophosphate Man9GlcNAc2 alpha-1,3-glucosyltransferase (gny).